We begin with the raw amino-acid sequence, 607 residues long: UvrABC system protein C (607 aa).

The GIY-YIG domain occupies 16 to 94; sequence GRPGVYRMFD…IKEWRPPYNI (79 aa). The UVR domain maps to 203–238; it reads NALTDELSTAMEAAASTLDFEKAAELRDQISLLRRV.

This sequence belongs to the UvrC family. In terms of assembly, interacts with UvrB in an incision complex.

It localises to the cytoplasm. In terms of biological role, the UvrABC repair system catalyzes the recognition and processing of DNA lesions. UvrC both incises the 5' and 3' sides of the lesion. The N-terminal half is responsible for the 3' incision and the C-terminal half is responsible for the 5' incision. The sequence is that of UvrABC system protein C from Pseudomonas fluorescens (strain ATCC BAA-477 / NRRL B-23932 / Pf-5).